The following is a 204-amino-acid chain: Signal peptidase I (204 aa).

At 1 to 10 the chain is on the cytoplasmic side; the sequence is MNSFKNFLKE. The chain crosses the membrane as a helical span at residues 11-30; it reads WGLFLLILSLLALSRIFFWS. Residues 31-204 are Extracellular-facing; it reads NVRVEGHSMD…LWPITRIGTF (174 aa). Catalysis depends on residues Ser38 and Lys76.

This sequence belongs to the peptidase S26 family.

It is found in the cell membrane. It carries out the reaction Cleavage of hydrophobic, N-terminal signal or leader sequences from secreted and periplasmic proteins.. The sequence is that of Signal peptidase I (lepB) from Streptococcus pneumoniae serotype 4 (strain ATCC BAA-334 / TIGR4).